A 345-amino-acid polypeptide reads, in one-letter code: Dihydroorotase (345 aa).

The Zn(2+) site is built by H13 and H15. Substrate-binding positions include 15–17 and N41; that span reads HFR. Residues K98, H135, and H173 each contribute to the Zn(2+) site. At K98 the chain carries N6-carboxylysine. Position 135 (H135) interacts with substrate. Substrate is bound at residue L218. Residue D246 coordinates Zn(2+). D246 is a catalytic residue. Residues H250 and A262 each contribute to the substrate site.

It belongs to the metallo-dependent hydrolases superfamily. DHOase family. Class II DHOase subfamily. As to quaternary structure, homodimer. Requires Zn(2+) as cofactor.

It catalyses the reaction (S)-dihydroorotate + H2O = N-carbamoyl-L-aspartate + H(+). It functions in the pathway pyrimidine metabolism; UMP biosynthesis via de novo pathway; (S)-dihydroorotate from bicarbonate: step 3/3. Functionally, catalyzes the reversible cyclization of carbamoyl aspartate to dihydroorotate. The sequence is that of Dihydroorotase from Shewanella frigidimarina (strain NCIMB 400).